The following is a 376-amino-acid chain: Hydroxylysine kinase (376 aa).

Asp-229 (proton acceptor) is an active-site residue.

This sequence belongs to the aminoglycoside phosphotransferase family.

It is found in the cytoplasm. The catalysed reaction is (5R)-5-hydroxy-L-lysine + GTP = (5R)-5-phosphooxy-L-lysine + GDP + H(+). Its function is as follows. Catalyzes the GTP-dependent phosphorylation of 5-hydroxy-L-lysine. The protein is Hydroxylysine kinase (Hykk) of Mus musculus (Mouse).